The primary structure comprises 442 residues: DDB1- and CUL4-associated factor 12-B (442 aa).

Basic residues predominate over residues 1 to 13; it reads MTRRPVSRKRRAT. The interval 1 to 31 is disordered; the sequence is MTRRPVSRKRRATHGTGPGEQSDWDHSAHKR. WD repeat units follow at residues 132-173, 177-215, 245-284, and 333-370; these read SHQS…PVCV, GHND…VNKR, PVNC…SKLL, and EQGS…FLED.

The protein belongs to the WD repeat DCAF12 family. In terms of assembly, component of the DCX(DCAF12) E3 ubiquitin ligase complex, at least composed of cul4 (cul4a or cul4b), ddb1, dcaf12 and rbx1.

It localises to the cytoplasm. Its subcellular location is the cytoskeleton. It is found in the microtubule organizing center. The protein resides in the centrosome. The protein localises to the nucleus. The protein operates within protein modification; protein ubiquitination. In terms of biological role, substrate-recognition component of a DCX (DDB1-CUL4-X-box) E3 ubiquitin-protein ligase complex of the DesCEND (destruction via C-end degrons) pathway, which recognizes a C-degron located at the extreme C terminus of target proteins, leading to their ubiquitination and degradation. The C-degron recognized by the DesCEND pathway is usually a motif of less than ten residues and can be present in full-length proteins, truncated proteins or proteolytically cleaved forms. The DCX(DCAF12) complex specifically recognizes proteins with a diglutamate (Glu-Glu) at the C-terminus leading to their ubiquitination and degradation. Also directly recognizes the C-terminal glutamate-leucine (Glu-Leu) degron as an alternative degron in proteins leading to their ubiquitination and degradation. The chain is DDB1- and CUL4-associated factor 12-B (dcaf12-b) from Xenopus laevis (African clawed frog).